A 259-amino-acid polypeptide reads, in one-letter code: MLAKRIIPCLDVTGGRVVKGVNFVELRDAGDPVEIAARYNAQGADELTFLDITATSDERDLILPIIEAVASQVFIPLTVGGGVRTVEDVRRLLNAGADKTSFNSAAIANPDVISQASAKYGAQCIVVAIDAKRRQGAEVAERGEGWDVYSHGGRKNTGLDAVQWAVEMARRGAGEILLTSMDRDGTKSGFDLQLTRAVSDAVGVPVIASGGVGNLDHLADGVQQGGADAVLAASIFHYGEFTVRQAKERMRERGIPVRL.

Active-site residues include D11 and D130.

This sequence belongs to the HisA/HisF family. As to quaternary structure, heterodimer of HisH and HisF.

Its subcellular location is the cytoplasm. The catalysed reaction is 5-[(5-phospho-1-deoxy-D-ribulos-1-ylimino)methylamino]-1-(5-phospho-beta-D-ribosyl)imidazole-4-carboxamide + L-glutamine = D-erythro-1-(imidazol-4-yl)glycerol 3-phosphate + 5-amino-1-(5-phospho-beta-D-ribosyl)imidazole-4-carboxamide + L-glutamate + H(+). It functions in the pathway amino-acid biosynthesis; L-histidine biosynthesis; L-histidine from 5-phospho-alpha-D-ribose 1-diphosphate: step 5/9. IGPS catalyzes the conversion of PRFAR and glutamine to IGP, AICAR and glutamate. The HisF subunit catalyzes the cyclization activity that produces IGP and AICAR from PRFAR using the ammonia provided by the HisH subunit. This Acidovorax ebreus (strain TPSY) (Diaphorobacter sp. (strain TPSY)) protein is Imidazole glycerol phosphate synthase subunit HisF.